A 322-amino-acid polypeptide reads, in one-letter code: tRNA pseudouridine synthase B (322 aa).

The segment covering 1–11 (MRPPRTTELDR) has biased composition (basic and acidic residues). Residues 1–22 (MRPPRTTELDRPMTTAASQRPR) form a disordered region. Residue Asp-65 is the Nucleophile of the active site.

It belongs to the pseudouridine synthase TruB family. Type 1 subfamily.

The catalysed reaction is uridine(55) in tRNA = pseudouridine(55) in tRNA. In terms of biological role, responsible for synthesis of pseudouridine from uracil-55 in the psi GC loop of transfer RNAs. This Burkholderia lata (strain ATCC 17760 / DSM 23089 / LMG 22485 / NCIMB 9086 / R18194 / 383) protein is tRNA pseudouridine synthase B.